A 365-amino-acid chain; its full sequence is MLKVIQSPAKYLQGPDASTLFGQYAKNLADSFFVIADDFVMKLAGEKVLNGLHSHDISCHAERFNGECSHIEINRLIAILKQHGCRGVVGIGGGKTLDTAKAIGYYQKLPVVVIPTIASTDAPTSALSVIYTEAGEFEEYLIYPKNPDMVVMDTAIIAKAPVRLLVAGMGDALSTWFEAKACYDARATSMAGGQSTVAALSLARLCYDTLLAEGEKARFAAQAGVVTDALERIVEANTYLSGIGFESSGLAGAHAIHNGFTILEECHHLYHGEKVAFGTLAQLVLQNSPMEEIETVLNFCQKVGLPVTLAEMGVKDDIDGKIMAVAKATCAEGETIHNMPFSVTPESVHAAILTADLLGQQWLAR.

Positions 37, 94, 95, 116, and 119 each coordinate NAD(+). Residue Asp121 participates in glycerol binding. NAD(+)-binding residues include Ser125, Leu127, and Tyr131. 3 residues coordinate Mn(2+): Asp171, His254, and His271. A glycerol-binding site is contributed by His254.

The protein belongs to the iron-containing alcohol dehydrogenase family. In terms of assembly, homohexamer. The cofactor is Mn(2+).

The enzyme catalyses glycerol + NAD(+) = dihydroxyacetone + NADH + H(+). The catalysed reaction is hydroxyacetone + NADH + H(+) = (S)-propane-1,2-diol + NAD(+). The protein operates within polyol metabolism; glycerol fermentation; glycerone phosphate from glycerol (oxidative route): step 1/2. Inhibited by zinc. In terms of biological role, catalyzes the NAD-dependent oxidation of glycerol to dihydroxyacetone (glycerone). Allows microorganisms to utilize glycerol as a source of carbon under anaerobic conditions. Exhibits a rather broad substrate specificity since it can also oxidize 1,2-propanediol and 2,3-butanediol and reduce dihydroxyacetone. Cannot use NADP(+) as an electron acceptor for the oxidation of glycerol. The sequence is that of Glycerol dehydrogenase from Citrobacter freundii.